The chain runs to 315 residues: Glutamyl-Q tRNA(Asp) synthetase (315 aa).

Residues 12–16 (RFAPS) and glutamate 48 each bind L-glutamate. The 'HIGH' region signature appears at 15–25 (PSPSGPLHFGS). Residues cysteine 104, cysteine 106, tyrosine 124, and cysteine 128 each contribute to the Zn(2+) site. The L-glutamate site is built by tyrosine 181 and arginine 199. The 'KMSKS' region motif lies at 237-241 (KLSKQ). Lysine 240 contacts ATP.

This sequence belongs to the class-I aminoacyl-tRNA synthetase family. GluQ subfamily. The cofactor is Zn(2+).

In terms of biological role, catalyzes the tRNA-independent activation of glutamate in presence of ATP and the subsequent transfer of glutamate onto a tRNA(Asp). Glutamate is transferred on the 2-amino-5-(4,5-dihydroxy-2-cyclopenten-1-yl) moiety of the queuosine in the wobble position of the QUC anticodon. This chain is Glutamyl-Q tRNA(Asp) synthetase, found in Aromatoleum aromaticum (strain DSM 19018 / LMG 30748 / EbN1) (Azoarcus sp. (strain EbN1)).